Reading from the N-terminus, the 202-residue chain is LexA repressor (202 aa).

Residues 28–48 constitute a DNA-binding region (H-T-H motif); the sequence is RAEIAMRLGFRSPNAAEEHLK. Active-site for autocatalytic cleavage activity residues include serine 119 and lysine 156.

Belongs to the peptidase S24 family. Homodimer.

It catalyses the reaction Hydrolysis of Ala-|-Gly bond in repressor LexA.. Functionally, represses a number of genes involved in the response to DNA damage (SOS response), including recA and lexA. Binds to the 16 bp palindromic sequence 5'-CTGTATATATATACAG-3'. In the presence of single-stranded DNA, RecA interacts with LexA causing an autocatalytic cleavage which disrupts the DNA-binding part of LexA, leading to derepression of the SOS regulon and eventually DNA repair. The protein is LexA repressor of Serratia proteamaculans (strain 568).